Consider the following 464-residue polypeptide: Argininosuccinate lyase (464 aa).

The protein belongs to the lyase 1 family. Argininosuccinate lyase subfamily.

Its subcellular location is the cytoplasm. It catalyses the reaction 2-(N(omega)-L-arginino)succinate = fumarate + L-arginine. The protein operates within amino-acid biosynthesis; L-arginine biosynthesis; L-arginine from L-ornithine and carbamoyl phosphate: step 3/3. The polypeptide is Argininosuccinate lyase (Koribacter versatilis (strain Ellin345)).